The sequence spans 125 residues: MKQQGMTLLEVMVALVIFALAGLTVLKTTAQQANGLGRLEEKTFALWIAENQQAAMRLEKQWPQSQWVDGEVNFAGSLWFWRIQGIATADTRVRAIDVEVRHDRDSRAADAVLRSYLVQPGEPAQ.

Residues 1 to 5 (MKQQG) constitute a propeptide, leader sequence. At Met-6 the chain carries N-methylmethionine. Residues 6–26 (MTLLEVMVALVIFALAGLTVL) traverse the membrane as a helical segment.

This sequence belongs to the GSP I family. As to quaternary structure, type II secretion is composed of four main components: the outer membrane complex, the inner membrane complex, the cytoplasmic secretion ATPase and the periplasm-spanning pseudopilus. Interacts with core component OutG. In terms of processing, cleaved by prepilin peptidase. Methylated by prepilin peptidase at the amino group of the N-terminal methionine once the leader sequence is cleaved by prepilin peptidase.

Its subcellular location is the cell inner membrane. Component of the type II secretion system required for the energy-dependent secretion of extracellular factors such as proteases and toxins from the periplasm. Part of the pseudopilus tip complex that is critical for the recognition and binding of secretion substrates. The sequence is that of Type II secretion system protein I (outI) from Dickeya chrysanthemi (Pectobacterium chrysanthemi).